The sequence spans 357 residues: MAASMAHYQGHLSNRITTGRAETVGQAQYPPRRAERKYKLEVEQQPIRARMCGFGDKDRRPITPPPCIRLVVLDEMDRELDFNEIDSTYFVLMVDLWNESGQSAVNLVRHSSAAPTVSISSSTTTSYPPPPERSHYVATTIPGYDAHSQAYRHQQHQHQHQHQHMQPQPMAAAGYGPGAHTGVAVPPYYPPTPQPPTPTYQQYPAPAPAAPYGQAPAPSAMIPATPMSSNHTRNLIGMNAVNACRLNDTKNKPGFWFVLQDLSVRTEGTFRLKLFLFDIGAGDGTNATVAADGPTRGKGKCLAVNFSDPFTVYSAKKFPGVIESTPLSKCFAQQGIKIPIRKDGPKLPNQAEYDADD.

The Velvet domain occupies 32 to 341 (RRAERKYKLE…AQQGIKIPIR (310 aa)).

It belongs to the velvet family. VelB subfamily. As to quaternary structure, component of the heterotrimeric velvet complex composed of LAE1, VEL1 and VEL2; VEL1A acting as a bridging protein between LAE1 and VEL2. Forms a heterodimeric complex with VOS1; the formation of the VEL2-VOS1 complex is light-dependent.

It localises to the nucleus. It is found in the cytoplasm. Functionally, component of the velvet transcription factor complex that controls sexual/asexual developmental ratio in response to light, promoting sexual development in the darkness while stimulating asexual sporulation under illumination. The velvet complex acts as a global regulator for secondary metabolite gene expression. Component of the VEL2-VOS1 heterodimeric complex that plays a dual role in activating genes associated with spore maturation and repressing certain development-associated genes. The complex binds DNA through the DNA-binding domain of VOS1 that recognizes an 11-nucleotide consensus sequence 5'-CTGGCCGCGGC-3' consisting of two motifs in the promoters of key developmental regulatory genes. The VEL2-VOS1 complex is required for normal pseudothecium development and regulates asexual spore compartmentalization, pigmentation and germination. The sequence is that of Velvet complex subunit 2 from Cochliobolus heterostrophus (strain C5 / ATCC 48332 / race O) (Southern corn leaf blight fungus).